The sequence spans 957 residues: Glycine dehydrogenase (decarboxylating) (957 aa).

An N6-(pyridoxal phosphate)lysine modification is found at Lys702.

It belongs to the GcvP family. The glycine cleavage system is composed of four proteins: P, T, L and H. Requires pyridoxal 5'-phosphate as cofactor.

The enzyme catalyses N(6)-[(R)-lipoyl]-L-lysyl-[glycine-cleavage complex H protein] + glycine + H(+) = N(6)-[(R)-S(8)-aminomethyldihydrolipoyl]-L-lysyl-[glycine-cleavage complex H protein] + CO2. The glycine cleavage system catalyzes the degradation of glycine. The P protein binds the alpha-amino group of glycine through its pyridoxal phosphate cofactor; CO(2) is released and the remaining methylamine moiety is then transferred to the lipoamide cofactor of the H protein. The sequence is that of Glycine dehydrogenase (decarboxylating) from Synechococcus sp. (strain RCC307).